We begin with the raw amino-acid sequence, 1056 residues long: Isoleucine--tRNA ligase (1056 aa).

Residues 1 to 13 show a composition bias toward polar residues; the sequence is MCDQGEVSSQNSS. A disordered region spans residues 1–26; the sequence is MCDQGEVSSQNSSDYKEQRPTPRPNL. A 'HIGH' region motif is present at residues 63–73; it reads PFANGLPHFGH. The 'KMSKS' region motif lies at 632 to 636; sequence KASKS. Residue lysine 635 participates in ATP binding.

It belongs to the class-I aminoacyl-tRNA synthetase family. IleS type 2 subfamily. As to quaternary structure, monomer. It depends on Zn(2+) as a cofactor.

It localises to the cytoplasm. It carries out the reaction tRNA(Ile) + L-isoleucine + ATP = L-isoleucyl-tRNA(Ile) + AMP + diphosphate. Its function is as follows. Catalyzes the attachment of isoleucine to tRNA(Ile). As IleRS can inadvertently accommodate and process structurally similar amino acids such as valine, to avoid such errors it has two additional distinct tRNA(Ile)-dependent editing activities. One activity is designated as 'pretransfer' editing and involves the hydrolysis of activated Val-AMP. The other activity is designated 'posttransfer' editing and involves deacylation of mischarged Val-tRNA(Ile). The sequence is that of Isoleucine--tRNA ligase from Tropheryma whipplei (strain TW08/27) (Whipple's bacillus).